The following is a 786-amino-acid chain: MNEKILKTLEYDKIQQALLGQVVTANGRQLVQAMQPLTDPVAVQQALDETADGASALRLKGGIPVPQLENIDPALKRVDIGAVLNGQELASISRVLQTVSAIDKFLTDLQDQIDFRQLYTLQESLTVLPQLSRRLKTAVDPDGTLTDEASPQLHGVREQIKSIEGEIRGKMTNYTRGAQSKYLSDPIVTIRDDRYVIPVKAEYRAKFGGVVHDQSATGQTLFIEPQAIVALNNRLREAQLAEVAEINRILAELSNELAPYTGQIKANAAVLGHFDFINAKARLAKAEKATEPLVSADNDVLLRDARHPLIDPHKVVGNDIPLGDKYQAMVITGPNTGGKTITLKTLGLLQLMGQSGLFIPADDESRIGIFDEVFADIGDEQSIEQNLSTFSAHMDNIVHILKQLSQNSLVLFDELGAGTDPQEGAALAIAILDAVGEVGAYVVATTHYPELKLYGYNTAKTINASMEFDSKTLQPTYRLLVGVPGRSNAFDISARLGLPGVIVERAKSMISSDSHELNNMISDLEKQRKAAETAYEAARRQLADAQSVHDELAAAYKKFTTERDAQLQQAKDKANTLVDKAQTKADKIIKQLRQMQLTNPGTVKENQLIAAKTALKQLHQDEPLQKNRILRREREKQALHVGDEVKVASYDQTGTLLEQFDKKHWQVQLGILKMKVPTDELKKIKSSKQSAAQRPVVKVSGGGMSGPSTTLDLRGERYDQAMADLDQYIDAALLAGYPSVTIIHGLGTGAIRNGVTQYLKRNRQVKTYGFAPQNAGGSGATIVNFK.

ATP is bound at residue Gly333–Thr340. Positions Leu711–Lys786 constitute a Smr domain.

This sequence belongs to the DNA mismatch repair MutS family. MutS2 subfamily. In terms of assembly, homodimer. Binds to stalled ribosomes, contacting rRNA.

Endonuclease that is involved in the suppression of homologous recombination and thus may have a key role in the control of bacterial genetic diversity. Functionally, acts as a ribosome collision sensor, splitting the ribosome into its 2 subunits. Detects stalled/collided 70S ribosomes which it binds and splits by an ATP-hydrolysis driven conformational change. Acts upstream of the ribosome quality control system (RQC), a ribosome-associated complex that mediates the extraction of incompletely synthesized nascent chains from stalled ribosomes and their subsequent degradation. Probably generates substrates for RQC. The protein is Endonuclease MutS2 of Lacticaseibacillus paracasei (strain ATCC 334 / BCRC 17002 / CCUG 31169 / CIP 107868 / KCTC 3260 / NRRL B-441) (Lactobacillus paracasei).